The primary structure comprises 227 residues: DNA repair protein RecO (227 aa).

The protein belongs to the RecO family.

In terms of biological role, involved in DNA repair and RecF pathway recombination. This chain is DNA repair protein RecO, found in Pseudomonas entomophila (strain L48).